Consider the following 644-residue polypeptide: 3-isopropylmalate dehydratase (644 aa).

The [4Fe-4S] cluster site is built by Cys-400, Cys-460, and Cys-463. The disordered stretch occupies residues 521–568; it reads SEIPGTPKQSPRQEVVAEFESEEDDVDSSSVDSAPVATPPSTGDSAGM. Residues 537-547 are compositionally biased toward acidic residues; the sequence is AEFESEEDDVD.

The protein belongs to the aconitase/IPM isomerase family. Monomer. The cofactor is [4Fe-4S] cluster.

It carries out the reaction (2R,3S)-3-isopropylmalate = (2S)-2-isopropylmalate. It functions in the pathway amino-acid biosynthesis; L-leucine biosynthesis; L-leucine from 3-methyl-2-oxobutanoate: step 2/4. Catalyzes the isomerization between 2-isopropylmalate and 3-isopropylmalate, via the formation of 2-isopropylmaleate. In Mucor circinelloides f. lusitanicus (Mucor racemosus var. lusitanicus), this protein is 3-isopropylmalate dehydratase (LEUA).